The primary structure comprises 549 residues: Nectin-3 (549 aa).

Positions 1 to 57 are cleaved as a signal peptide; the sequence is MARTLRPSPLCPGGGKAQLSSASLLGAGLLLQPPTPPPLLLLLFPLLLFSRLCGALA. Over 58 to 404 the chain is Extracellular; the sequence is GPIIVEPHVT…ATIKDDTIAT (347 aa). The 107-residue stretch at 59 to 165 folds into the Ig-like V-type domain; that stretch reads PIIVEPHVTA…GNAQSSTTVT (107 aa). 6 N-linked (GlcNAc...) asparagine glycosylation sites follow: Asn73, Asn83, Asn125, Asn186, Asn222, and Asn331. Cys78 and Cys148 are oxidised to a cystine. Ig-like C2-type domains follow at residues 170–258 and 269–354; these read PTVS…KDIR and PEVS…KVIY. 2 disulfides stabilise this stretch: Cys193–Cys246 and Cys291–Cys338. The chain crosses the membrane as a helical span at residues 405 to 425; that stretch reads IIASVVGGALFIVLVSVLAGI. The Cytoplasmic portion of the chain corresponds to 426–549; sequence FCYRRRRTFR…SVISRREWYV (124 aa).

It belongs to the nectin family. In terms of assembly, cis- and trans-homodimer. Can form trans-heterodimers with NECTIN1, NECTIN2, PVR, IGSF4B/Necl-1 and with IGSF4. Interaction between NECTIN1 and NECTIN3 on the pre- and postsynaptic sites, respectively, initiates the formation of puncta adherentia junctions between axons and dendrites. Interacts (via Cytoplasmic domain) with AFDN, providing a connection with the actin cytoskeleton. Binds with low affinity to TIGIT. (Microbial infection) Interacts with C.difficile toxin TcdB, suggesting that it may contribute to TcdB toxin entry into cells. It was however shown that NECTIN3/PVRL3 does not act as a major receptor for TcdB. Predominantly expressed in testis and placenta as well as in many cell lines, including epithelial cell lines.

It is found in the cell membrane. Its subcellular location is the postsynaptic cell membrane. The protein localises to the cell junction. It localises to the adherens junction. Cell adhesion molecule that promotes cell-cell adhesion through heterophilic trans-interactions with nectins-like or other nectins, such as trans-interaction with NECTIN2 at Sertoli-spermatid junctions. Trans-interaction with PVR induces activation of CDC42 and RAC small G proteins through common signaling molecules such as SRC and RAP1. Induces endocytosis-mediated down-regulation of PVR from the cell surface, resulting in reduction of cell movement and proliferation. Involved in axon guidance by promoting contacts between the commissural axons and the floor plate cells. Also involved in the formation of cell-cell junctions, including adherens junctions and synapses. Promotes formation of checkerboard-like cellular pattern of hair cells and supporting cells in the auditory epithelium via heterophilic interaction with NECTIN1: NECTIN1 is present in the membrane of hair cells and associates with NECTIN3 on supporting cells, thereby mediating heterotypic adhesion between these two cell types. Plays a role in the morphology of the ciliary body. The protein is Nectin-3 of Homo sapiens (Human).